Consider the following 301-residue polypeptide: Uricase-2 isozyme 2 (301 aa).

Residues Lys17 and Thr63 each act as charge relay system in the active site. Urate-binding residues include Thr63, Asp64, Phe165, Arg182, Val237, Gln238, and Asn257. The active-site Charge relay system is His259. The Microbody targeting signal motif lies at 299-301 (SKL).

Belongs to the uricase family.

The protein resides in the peroxisome. It carries out the reaction urate + O2 + H2O = 5-hydroxyisourate + H2O2. The protein operates within purine metabolism; urate degradation; (S)-allantoin from urate: step 1/3. Its function is as follows. Catalyzes the oxidation of uric acid to 5-hydroxyisourate, which is further processed to form (S)-allantoin. The polypeptide is Uricase-2 isozyme 2 (Canavalia lineata (Beach bean)).